We begin with the raw amino-acid sequence, 385 residues long: Chaperone protein DnaJ (385 aa).

Residues 5–70 (DYYEILEITR…SKRQIYDKYG (66 aa)) enclose the J domain. The CR-type zinc finger occupies 136 to 213 (GCKKEIHNSF…CKGSGFEISE (78 aa)). Residues Cys-149, Cys-152, Cys-165, Cys-168, Cys-187, Cys-190, Cys-201, and Cys-204 each contribute to the Zn(2+) site. CXXCXGXG motif repeat units lie at residues 149–156 (CSDCKGTG), 165–172 (CKDCGGKG), 187–194 (CPTCKGEG), and 201–208 (CSKCKGSG).

This sequence belongs to the DnaJ family. In terms of assembly, homodimer. The cofactor is Zn(2+).

It localises to the cytoplasm. Functionally, participates actively in the response to hyperosmotic and heat shock by preventing the aggregation of stress-denatured proteins and by disaggregating proteins, also in an autonomous, DnaK-independent fashion. Unfolded proteins bind initially to DnaJ; upon interaction with the DnaJ-bound protein, DnaK hydrolyzes its bound ATP, resulting in the formation of a stable complex. GrpE releases ADP from DnaK; ATP binding to DnaK triggers the release of the substrate protein, thus completing the reaction cycle. Several rounds of ATP-dependent interactions between DnaJ, DnaK and GrpE are required for fully efficient folding. Also involved, together with DnaK and GrpE, in the DNA replication of plasmids through activation of initiation proteins. This Helicobacter hepaticus (strain ATCC 51449 / 3B1) protein is Chaperone protein DnaJ.